A 371-amino-acid chain; its full sequence is ATP-dependent protease ATP-binding subunit-like protein AmiB (371 aa).

96–103 (GPTGVGKT) contributes to the ATP binding site.

This sequence belongs to the ClpX chaperone family. Mg(2+) serves as cofactor.

Unlikely to encode a regulatory protein. Has ATPase activity. AmiB and AmiS may act jointly into a two component ABC transporter system. The chain is ATP-dependent protease ATP-binding subunit-like protein AmiB (amiB) from Pseudomonas aeruginosa (strain ATCC 15692 / DSM 22644 / CIP 104116 / JCM 14847 / LMG 12228 / 1C / PRS 101 / PAO1).